Here is a 438-residue protein sequence, read N- to C-terminus: Xylose isomerase (438 aa).

Catalysis depends on residues His100 and Asp103. Mg(2+)-binding residues include Glu231, Glu267, His270, Asp295, Asp306, Asp308, and Asp338.

Belongs to the xylose isomerase family. In terms of assembly, homotetramer. Mg(2+) is required as a cofactor.

The protein localises to the cytoplasm. The catalysed reaction is alpha-D-xylose = alpha-D-xylulofuranose. In Pseudomonas syringae pv. tomato (strain ATCC BAA-871 / DC3000), this protein is Xylose isomerase.